The chain runs to 48 residues: Small ribosomal subunit protein uS14 (48 aa).

The Zn(2+) site is built by Cys13, Cys16, Cys31, and Cys34.

Belongs to the universal ribosomal protein uS14 family. Zinc-binding uS14 subfamily. In terms of assembly, part of the 30S ribosomal subunit. Zn(2+) serves as cofactor.

Binds 16S rRNA, required for the assembly of 30S particles. This Methanopyrus kandleri (strain AV19 / DSM 6324 / JCM 9639 / NBRC 100938) protein is Small ribosomal subunit protein uS14.